The primary structure comprises 364 residues: Fructose-bisphosphate aldolase C (364 aa).

Tyrosine 5 carries the phosphotyrosine modification. 3 positions are modified to phosphoserine: serine 36, serine 39, and serine 45. Arginine 56 is a substrate binding site. Lysine 111 is subject to N6-acetyllysine. At serine 132 the chain carries Phosphoserine. Lysine 147 serves as a coordination point for substrate. The active-site Proton acceptor is the glutamate 188. Lysine 230 serves as the catalytic Schiff-base intermediate with dihydroxyacetone-P.

It belongs to the class I fructose-bisphosphate aldolase family. As to quaternary structure, homotetramer. Interacts with ATP6V1E1. May interact with PLD2.

The enzyme catalyses beta-D-fructose 1,6-bisphosphate = D-glyceraldehyde 3-phosphate + dihydroxyacetone phosphate. It functions in the pathway carbohydrate degradation; glycolysis; D-glyceraldehyde 3-phosphate and glycerone phosphate from D-glucose: step 4/4. This is Fructose-bisphosphate aldolase C (ALDOC) from Homo sapiens (Human).